A 238-amino-acid chain; its full sequence is tRNA (guanine-N(7)-)-methyltransferase (238 aa).

Glu-68, Glu-93, Asp-120, and Asp-143 together coordinate S-adenosyl-L-methionine. Asp-143 is an active-site residue. Substrate contacts are provided by residues Lys-147, Asp-179, and 216–219 (TKFE).

The protein belongs to the class I-like SAM-binding methyltransferase superfamily. TrmB family.

It catalyses the reaction guanosine(46) in tRNA + S-adenosyl-L-methionine = N(7)-methylguanosine(46) in tRNA + S-adenosyl-L-homocysteine. It functions in the pathway tRNA modification; N(7)-methylguanine-tRNA biosynthesis. In terms of biological role, catalyzes the formation of N(7)-methylguanine at position 46 (m7G46) in tRNA. The chain is tRNA (guanine-N(7)-)-methyltransferase from Stutzerimonas stutzeri (strain A1501) (Pseudomonas stutzeri).